A 186-amino-acid chain; its full sequence is Ribosome maturation factor RimM (186 aa).

The region spanning 93 to 166 (PDEYYDHQLM…RAVIDPPPGL (74 aa)) is the PRC barrel domain. Residues 160–186 (IDPPPGLIDDRAEVDSSDTEAATEADA) are disordered. A compositionally biased stretch (acidic residues) spans 174–186 (DSSDTEAATEADA).

The protein belongs to the RimM family. As to quaternary structure, binds ribosomal protein uS19.

It is found in the cytoplasm. Functionally, an accessory protein needed during the final step in the assembly of 30S ribosomal subunit, possibly for assembly of the head region. Essential for efficient processing of 16S rRNA. May be needed both before and after RbfA during the maturation of 16S rRNA. It has affinity for free ribosomal 30S subunits but not for 70S ribosomes. This Streptomyces avermitilis (strain ATCC 31267 / DSM 46492 / JCM 5070 / NBRC 14893 / NCIMB 12804 / NRRL 8165 / MA-4680) protein is Ribosome maturation factor RimM.